Reading from the N-terminus, the 691-residue chain is NADPH--cytochrome P450 reductase (691 aa).

Residues Pro-2 to Asn-7 lie on the Lumenal side of the membrane. The helical transmembrane segment at Thr-8–Val-24 threads the bilayer. Topologically, residues Lys-25–Trp-691 are cytoplasmic. The 144-residue stretch at Tyr-61 to Leu-204 folds into the Flavodoxin-like domain. FMN is bound by residues Ser-67–Ala-72, Lys-78, Ser-116–Gly-119, Leu-152–Asn-161, and Asp-187. In terms of domain architecture, FAD-binding FR-type spans Ser-266–Pro-529. Arg-285 provides a ligand contact to NADP(+). FAD-binding positions include Arg-439–Ser-442, Thr-457–Ile-459, and Gly-476–Thr-479. NADP(+) contacts are provided by residues Thr-543, Ser-610–Arg-611, Lys-617–Gln-621, and Asp-646. A Glycyl lysine isopeptide (Lys-Gly) (interchain with G-Cter in ubiquitin) cross-link involves residue Lys-666. Trp-691 is a binding site for FAD.

The protein belongs to the NADPH--cytochrome P450 reductase family. This sequence in the N-terminal section; belongs to the flavodoxin family. It in the C-terminal section; belongs to the flavoprotein pyridine nucleotide cytochrome reductase family. Interacts with PCL1. It depends on FAD as a cofactor. FMN is required as a cofactor. In terms of processing, phosphorylated by the cyclin-CDK PCL1-PHO85.

Its subcellular location is the endoplasmic reticulum membrane. It localises to the mitochondrion outer membrane. The protein resides in the cell membrane. It carries out the reaction 2 oxidized [cytochrome P450] + NADPH = 2 reduced [cytochrome P450] + NADP(+) + H(+). Its function is as follows. This enzyme is required for electron transfer from NADP to cytochrome P450 in microsomes. It can also provide electron transfer to heme oxygenase and cytochrome B5. Involved in ergosterol biosynthesis. Has NADPH-dependent ferrireductase activity on the plasma membrane. In Saccharomyces cerevisiae (strain ATCC 204508 / S288c) (Baker's yeast), this protein is NADPH--cytochrome P450 reductase.